Here is a 369-residue protein sequence, read N- to C-terminus: Phospho-N-acetylmuramoyl-pentapeptide-transferase (369 aa).

A run of 10 helical transmembrane segments spans residues 3 to 23 (ALLGAGAISLVFTLFLTPLFI), 53 to 73 (GGIVIILASVIGYFAGHLLTW), 81 to 101 (VTPSGLLVVFMMVGLGFVGFL), 118 to 138 (WQKIAGQVIVATVFAVLAITL), 162 to 182 (FMALGAVIGTGLFIVWICLIV), 198 to 218 (LAAGASIFSIGSYVIIGFWQF), 240 to 260 (PLDLAIIAASIVGALIGFLWW), 267 to 287 (IFMGDTGSLGLGGALAALAIL), 290 to 310 (TELLLVFIGGLFVIVAGSVVL), and 347 to 367 (FWIIAGLLVAAGVGTFYLEWI).

Belongs to the glycosyltransferase 4 family. MraY subfamily. The cofactor is Mg(2+).

It localises to the cell membrane. It catalyses the reaction UDP-N-acetyl-alpha-D-muramoyl-L-alanyl-gamma-D-glutamyl-meso-2,6-diaminopimeloyl-D-alanyl-D-alanine + di-trans,octa-cis-undecaprenyl phosphate = di-trans,octa-cis-undecaprenyl diphospho-N-acetyl-alpha-D-muramoyl-L-alanyl-D-glutamyl-meso-2,6-diaminopimeloyl-D-alanyl-D-alanine + UMP. The protein operates within cell wall biogenesis; peptidoglycan biosynthesis. Its function is as follows. Catalyzes the initial step of the lipid cycle reactions in the biosynthesis of the cell wall peptidoglycan: transfers peptidoglycan precursor phospho-MurNAc-pentapeptide from UDP-MurNAc-pentapeptide onto the lipid carrier undecaprenyl phosphate, yielding undecaprenyl-pyrophosphoryl-MurNAc-pentapeptide, known as lipid I. The chain is Phospho-N-acetylmuramoyl-pentapeptide-transferase from Clavibacter sepedonicus (Clavibacter michiganensis subsp. sepedonicus).